Here is a 455-residue protein sequence, read N- to C-terminus: tRNA modification GTPase MnmE (455 aa).

Arginine 22 is a binding site for (6S)-5-formyl-5,6,7,8-tetrahydrofolate. Positions 43–67 are disordered; it reads RRATRAALRSPPSGPGPTGPGPEEG. Positions 92 and 132 each coordinate (6S)-5-formyl-5,6,7,8-tetrahydrofolate. The TrmE-type G domain occupies 228-381; it reads GLQVAVVGAP…LEAALESRAR (154 aa). Asparagine 238 is a K(+) binding site. Residues 238–243, 257–263, and 282–285 each bind GTP; these read NVGKSS, SDIAGTT, and DTAG. Serine 242 is a Mg(2+) binding site. 3 residues coordinate K(+): serine 257, isoleucine 259, and threonine 262. Threonine 263 is a binding site for Mg(2+). Lysine 455 provides a ligand contact to (6S)-5-formyl-5,6,7,8-tetrahydrofolate.

It belongs to the TRAFAC class TrmE-Era-EngA-EngB-Septin-like GTPase superfamily. TrmE GTPase family. As to quaternary structure, homodimer. Heterotetramer of two MnmE and two MnmG subunits. The cofactor is K(+).

The protein localises to the cytoplasm. In terms of biological role, exhibits a very high intrinsic GTPase hydrolysis rate. Involved in the addition of a carboxymethylaminomethyl (cmnm) group at the wobble position (U34) of certain tRNAs, forming tRNA-cmnm(5)s(2)U34. The protein is tRNA modification GTPase MnmE of Rhodospirillum rubrum (strain ATCC 11170 / ATH 1.1.1 / DSM 467 / LMG 4362 / NCIMB 8255 / S1).